The primary structure comprises 232 residues: Putative N-acetylmannosamine-6-phosphate 2-epimerase (232 aa).

It belongs to the NanE family.

It catalyses the reaction an N-acyl-D-glucosamine 6-phosphate = an N-acyl-D-mannosamine 6-phosphate. The protein operates within amino-sugar metabolism; N-acetylneuraminate degradation; D-fructose 6-phosphate from N-acetylneuraminate: step 3/5. Converts N-acetylmannosamine-6-phosphate (ManNAc-6-P) to N-acetylglucosamine-6-phosphate (GlcNAc-6-P). The polypeptide is Putative N-acetylmannosamine-6-phosphate 2-epimerase (Proteus mirabilis (strain HI4320)).